A 496-amino-acid chain; its full sequence is MTCFTRVGVSCGLFFFLLGAQLQLIRCIRKDVLAGRLENVTQTISNILQGYDIRLRPNFGGEPLHVGMDLTIASFDAISEVNMDYTITMYLNQYWRDERLAFNIFGQYFDDENDDGISDVLTLSGDFAEKIWVPDTFFANDKNSFLHDVTERNKLVRLGGDGAVTYGMRFTTTLACMMDLHYYPLDSQNCTVEIESYGYTVSDVVMYWKPTPVRGVEDAELPQFTIIGYETNDRKERLATGVYQRLSLSFKLQRNIGYFVFQTYLPSILIVMLSWVSFWINHEATSARVALGITTVLTMTTISTGVRSSLPRISYVKAIDIYLVMCFVFVFAALLEYAAVNYTYWGKRAKKKIKKVKECCPGKIGKSERSETCSTTEDIIELQDVRMSPIPSLRRGTYNATLDSIGTETMNLGKFPPSFRITRNYGTGHSQLRRRAQRGISTRPRMLHALKRGASAIKATIPKIKDVNIIDKYSRMIFPISFLAFNLGYWLFYILE.

A signal peptide (or 27) is located at residues 1–20; the sequence is MTCFTRVGVSCGLFFFLLGA. The Extracellular segment spans residues 21–258; that stretch reads QLQLIRCIRK…SFKLQRNIGY (238 aa). Residues Asn39 and Asn189 are each glycosylated (N-linked (GlcNAc...) asparagine). A disulfide bridge links Cys176 with Cys190. A run of 3 helical transmembrane segments spans residues 259–280, 285–306, and 318–342; these read FVFQ…SFWI, TSAR…STGV, and AIDI…AVNY. The Cytoplasmic portion of the chain corresponds to 343-472; sequence TYWGKRAKKK…KIKDVNIIDK (130 aa). A helical membrane pass occupies residues 473–494; sequence YSRMIFPISFLAFNLGYWLFYI.

This sequence belongs to the ligand-gated ion channel (TC 1.A.9) family. Gamma-aminobutyric acid receptor (TC 1.A.9.5) subfamily. As to quaternary structure, generally pentameric. There are five types of GABA(A) receptor chains: alpha, beta, gamma, delta, and rho. Interacts with Grd (alpha chain).

It localises to the postsynaptic cell membrane. The protein localises to the cell membrane. Functionally, GABA, an inhibitory neurotransmitter, mediates neuronal inhibition by binding to the GABA receptor and opening an integral chloride channel. Combines with the ligand-gated ion channel subunit GRD to form cation-selective GABA-gated ion channels when coexpressed in Xenopus laevis oocytes. The sequence is that of Gamma-aminobutyric acid receptor subunit beta-like (Lcch3) from Drosophila melanogaster (Fruit fly).